The sequence spans 470 residues: Serine/threonine-protein kinase-like protein At1g28390 (470 aa).

The Protein kinase domain maps to 52–333 (FSANNFLGKG…LEVVECLKTV (282 aa)). ATP contacts are provided by residues 58 to 66 (LGKGSHGRV) and Lys-81. Asp-186 functions as the Proton acceptor in the catalytic mechanism. Phosphothreonine is present on residues Thr-221 and Thr-226. At Tyr-234 the chain carries Phosphotyrosine.

This sequence belongs to the protein kinase superfamily. Ser/Thr protein kinase family.

It catalyses the reaction L-seryl-[protein] + ATP = O-phospho-L-seryl-[protein] + ADP + H(+). The catalysed reaction is L-threonyl-[protein] + ATP = O-phospho-L-threonyl-[protein] + ADP + H(+). The chain is Serine/threonine-protein kinase-like protein At1g28390 from Arabidopsis thaliana (Mouse-ear cress).